The following is a 209-amino-acid chain: Imidazole glycerol phosphate synthase subunit HisH (209 aa).

The Glutamine amidotransferase type-1 domain occupies 1 to 205 (MIAIIDYGMG…KGVVEAWKSS (205 aa)). The Nucleophile role is filled by C79. Residues H180 and E182 contribute to the active site.

In terms of assembly, heterodimer of HisH and HisF.

It localises to the cytoplasm. The catalysed reaction is 5-[(5-phospho-1-deoxy-D-ribulos-1-ylimino)methylamino]-1-(5-phospho-beta-D-ribosyl)imidazole-4-carboxamide + L-glutamine = D-erythro-1-(imidazol-4-yl)glycerol 3-phosphate + 5-amino-1-(5-phospho-beta-D-ribosyl)imidazole-4-carboxamide + L-glutamate + H(+). The enzyme catalyses L-glutamine + H2O = L-glutamate + NH4(+). It participates in amino-acid biosynthesis; L-histidine biosynthesis; L-histidine from 5-phospho-alpha-D-ribose 1-diphosphate: step 5/9. Functionally, IGPS catalyzes the conversion of PRFAR and glutamine to IGP, AICAR and glutamate. The HisH subunit catalyzes the hydrolysis of glutamine to glutamate and ammonia as part of the synthesis of IGP and AICAR. The resulting ammonia molecule is channeled to the active site of HisF. The chain is Imidazole glycerol phosphate synthase subunit HisH from Bacillus mycoides (strain KBAB4) (Bacillus weihenstephanensis).